We begin with the raw amino-acid sequence, 62 residues long: Large ribosomal subunit protein eL24 (62 aa).

Zn(2+) contacts are provided by cysteine 6, cysteine 9, cysteine 32, and cysteine 36. A C4-type zinc finger spans residues 6-36; the sequence is CSFCEGTIEPGCGKKYVKKDGSVMHFCSSKC.

It belongs to the eukaryotic ribosomal protein eL24 family. In terms of assembly, part of the 50S ribosomal subunit. Forms a cluster with proteins L3 and L14. Zn(2+) is required as a cofactor.

In terms of biological role, binds to the 23S rRNA. In Methanococcus maripaludis (strain C5 / ATCC BAA-1333), this protein is Large ribosomal subunit protein eL24.